A 119-amino-acid polypeptide reads, in one-letter code: Iron-sulfur cluster insertion protein ErpA (119 aa).

The iron-sulfur cluster site is built by cysteine 47, cysteine 111, and cysteine 113.

The protein belongs to the HesB/IscA family. In terms of assembly, homodimer. It depends on iron-sulfur cluster as a cofactor.

Required for insertion of 4Fe-4S clusters for at least IspG. This is Iron-sulfur cluster insertion protein ErpA from Alcanivorax borkumensis (strain ATCC 700651 / DSM 11573 / NCIMB 13689 / SK2).